The chain runs to 345 residues: Tetraacyldisaccharide 4'-kinase (345 aa).

61-68 serves as a coordination point for ATP; that stretch reads TAGGTGKT.

This sequence belongs to the LpxK family.

The catalysed reaction is a lipid A disaccharide + ATP = a lipid IVA + ADP + H(+). The protein operates within glycolipid biosynthesis; lipid IV(A) biosynthesis; lipid IV(A) from (3R)-3-hydroxytetradecanoyl-[acyl-carrier-protein] and UDP-N-acetyl-alpha-D-glucosamine: step 6/6. Transfers the gamma-phosphate of ATP to the 4'-position of a tetraacyldisaccharide 1-phosphate intermediate (termed DS-1-P) to form tetraacyldisaccharide 1,4'-bis-phosphate (lipid IVA). The sequence is that of Tetraacyldisaccharide 4'-kinase from Xanthomonas euvesicatoria pv. vesicatoria (strain 85-10) (Xanthomonas campestris pv. vesicatoria).